The primary structure comprises 235 residues: Phosphoribosylaminoimidazole-succinocarboxamide synthase (235 aa).

Belongs to the SAICAR synthetase family.

It catalyses the reaction 5-amino-1-(5-phospho-D-ribosyl)imidazole-4-carboxylate + L-aspartate + ATP = (2S)-2-[5-amino-1-(5-phospho-beta-D-ribosyl)imidazole-4-carboxamido]succinate + ADP + phosphate + 2 H(+). It participates in purine metabolism; IMP biosynthesis via de novo pathway; 5-amino-1-(5-phospho-D-ribosyl)imidazole-4-carboxamide from 5-amino-1-(5-phospho-D-ribosyl)imidazole-4-carboxylate: step 1/2. The polypeptide is Phosphoribosylaminoimidazole-succinocarboxamide synthase (Chlorobium chlorochromatii (strain CaD3)).